The sequence spans 335 residues: MAAAEPTSSAQPTPQAQAQPPPHGAPSSQPSAALAGGSSRHEKSLGLLTTKFVSLLQEAQDGVLDLKAAADTLAVRQKRRIYDITNVLEGIDLIEKKSKNSIQWKGVGAGCNTKEVIDRLRCLKAEIEDLELKERELDQQKLWLQQSIKNVMEDSINNRFSYVTHEDICNCFHGDTLLAIQAPSGTQLEVPIPEMGQNGQKKYQINLKSHSGPIHVLLINKESSSSKPVVFPVPPPDDLTQPSSQSSTSVTPQKSTMAAQNLPEQHVSERSQTFQQTPAAEVSSGSISGDIIDELMSSDVFPLLRLSPTPADDYNFNLDDNEGVCDLFDVQILNY.

Positions 1-18 (MAAAEPTSSAQPTPQAQA) are enriched in low complexity. The segment at 1–40 (MAAAEPTSSAQPTPQAQAQPPPHGAPSSQPSAALAGGSSR) is disordered. The DNA-binding element occupies 37 to 108 (GSSRHEKSLG…KNSIQWKGVG (72 aa)). Positions 66-88 (LKAAADTLAVRQKRRIYDITNVL) are leucine-zipper. A DEF box motif is present at residues 71 to 108 (DTLAVRQKRRIYDITNVLEGIDLIEKKSKNSIQWKGVG). A dimerization region spans residues 109–205 (AGCNTKEVID…GQNGQKKYQI (97 aa)). A disordered region spans residues 226 to 285 (SKPVVFPVPPPDDLTQPSSQSSTSVTPQKSTMAAQNLPEQHVSERSQTFQQTPAAEVSSG). The span at 238 to 256 (DLTQPSSQSSTSVTPQKST) shows a compositional bias: low complexity. Residues 277 to 335 (TPAAEVSSGSISGDIIDELMSSDVFPLLRLSPTPADDYNFNLDDNEGVCDLFDVQILNY) are transactivation. Residues 312 to 329 (DDYNFNLDDNEGVCDLFD) are RBL2 association.

The protein belongs to the E2F/DP family. As to quaternary structure, component of the DRTF1/E2F transcription factor complex. Binds cooperatively with DP-1 to E2F sites. Interaction with retinoblastoma protein RB1 or proteins RBL1 and RBL2 inhibits the E2F transactivation domain. Component of the DREAM complex (also named LINC complex) at least composed of E2F4, E2F5, LIN9, LIN37, LIN52, LIN54, MYBL1, MYBL2, RBL1, RBL2, RBBP4, TFDP1 and TFDP2. The complex exists in quiescent cells where it represses cell cycle-dependent genes. It dissociates in S phase when LIN9, LIN37, LIN52 and LIN54 form a subcomplex that binds to MYBL2.

The protein localises to the nucleus. Functionally, transcriptional activator that binds to E2F sites, these sites are present in the promoter of many genes whose products are involved in cell proliferation. May mediate growth factor-initiated signal transduction. It is likely involved in the early responses of resting cells to growth factor stimulation. Specifically required for multiciliate cell differentiation: together with MCIDAS and E2F5, binds and activate genes required for centriole biogenesis. The protein is Transcription factor E2F5 (E2f5) of Mus musculus (Mouse).